The following is a 390-amino-acid chain: Transforming growth factor beta-1 proprotein (390 aa).

Residues 1 to 29 (MPPSGLRLLPLLLPLLWLLVLTPGRPAAG) form the signal peptide. Positions 30-74 (LSTCKTIDMELVKRKRIEAIRGQILSKLRLASPPSQGEVPPGPLP) are straightjacket domain. The tract at residues 75–271 (EAVLALYNST…ATPLERAQQL (197 aa)) is arm domain. N82, N136, and N176 each carry an N-linked (GlcNAc...) asparagine glycan. The interval 226–252 (DSKDNTLRVGINGFSSSRRGDLATIDG) is bowtie tail. Positions 244 to 246 (RGD) match the Cell attachment site motif. Disulfide bonds link C285/C294, C293/C356, C322/C387, and C326/C389.

This sequence belongs to the TGF-beta family. In terms of assembly, homodimer; disulfide-linked. Interacts with the serine proteases, HTRA1 and HTRA3: the interaction with either inhibits TGFB1-mediated signaling and the HTRA protease activity is required for this inhibition. May interact with THSD4; this interaction may lead to sequestration by FBN1 microfibril assembly and attenuation of TGFB signaling. Interacts with CD109, DPT and ASPN. Interacts with EFEMP2. Interacts with TSKU; the interaction contributes to regulation of the hair cycle. Interacts with TGFBR3. As to quaternary structure, homodimer; disulfide-linked. Interacts with transforming growth factor beta-1 (TGF-beta-1) chain; interaction is non-covalent and maintains TGF-beta-1 in a latent state; each latency-associated peptide (LAP) monomer interacts with TGF-beta-1 in the other monomer. Interacts with LTBP1; leading to regulation of TGF-beta-1 activation. Interacts with LRRC32/GARP; leading to regulation of TGF-beta-1 activation on the surface of activated regulatory T-cells (Tregs). Interacts with LRRC33/NRROS; leading to regulation of TGF-beta-1 activation in macrophages and microglia. Interacts (via cell attachment site) with integrins ITGAV and ITGB6 (ITGAV:ITGB6), leading to release of the active TGF-beta-1. Latency-associated peptide: Interacts with NREP; the interaction results in a decrease in TGFB1 autoinduction. Interacts with HSP90AB1; inhibits latent TGFB1 activation. Homodimer; disulfide-linked. Interacts with TGF-beta receptors (TGFBR1 and TGFBR2), leading to signal transduction. Post-translationally, transforming growth factor beta-1 proprotein: The precursor proprotein is cleaved in the Golgi apparatus by FURIN to form Transforming growth factor beta-1 (TGF-beta-1) and Latency-associated peptide (LAP) chains, which remain non-covalently linked, rendering TGF-beta-1 inactive. N-glycosylated. Deglycosylation leads to activation of Transforming growth factor beta-1 (TGF-beta-1); mechanisms triggering deglycosylation-driven activation of TGF-beta-1 are however unclear.

The protein resides in the secreted. It localises to the extracellular space. It is found in the extracellular matrix. Functionally, transforming growth factor beta-1 proprotein: Precursor of the Latency-associated peptide (LAP) and Transforming growth factor beta-1 (TGF-beta-1) chains, which constitute the regulatory and active subunit of TGF-beta-1, respectively. Its function is as follows. Required to maintain the Transforming growth factor beta-1 (TGF-beta-1) chain in a latent state during storage in extracellular matrix. Associates non-covalently with TGF-beta-1 and regulates its activation via interaction with 'milieu molecules', such as LTBP1, LRRC32/GARP and LRRC33/NRROS, that control activation of TGF-beta-1. Interaction with LRRC33/NRROS regulates activation of TGF-beta-1 in macrophages and microglia. Interaction with LRRC32/GARP controls activation of TGF-beta-1 on the surface of activated regulatory T-cells (Tregs). Interaction with integrins (ITGAV:ITGB6 or ITGAV:ITGB8) results in distortion of the Latency-associated peptide chain and subsequent release of the active TGF-beta-1. In terms of biological role, multifunctional protein that regulates the growth and differentiation of various cell types and is involved in various processes, such as normal development, immune function, microglia function and responses to neurodegeneration. Activation into mature form follows different steps: following cleavage of the proprotein in the Golgi apparatus, Latency-associated peptide (LAP) and Transforming growth factor beta-1 (TGF-beta-1) chains remain non-covalently linked rendering TGF-beta-1 inactive during storage in extracellular matrix. At the same time, LAP chain interacts with 'milieu molecules', such as LTBP1, LRRC32/GARP and LRRC33/NRROS that control activation of TGF-beta-1 and maintain it in a latent state during storage in extracellular milieus. TGF-beta-1 is released from LAP by integrins (ITGAV:ITGB6 or ITGAV:ITGB8): integrin-binding to LAP stabilizes an alternative conformation of the LAP bowtie tail and results in distortion of the LAP chain and subsequent release of the active TGF-beta-1. Once activated following release of LAP, TGF-beta-1 acts by binding to TGF-beta receptors (TGFBR1 and TGFBR2), which transduce signal. While expressed by many cells types, TGF-beta-1 only has a very localized range of action within cell environment thanks to fine regulation of its activation by Latency-associated peptide chain (LAP) and 'milieu molecules'. Plays an important role in bone remodeling: acts as a potent stimulator of osteoblastic bone formation, causing chemotaxis, proliferation and differentiation in committed osteoblasts. Can promote either T-helper 17 cells (Th17) or regulatory T-cells (Treg) lineage differentiation in a concentration-dependent manner. At high concentrations, leads to FOXP3-mediated suppression of RORC and down-regulation of IL-17 expression, favoring Treg cell development. At low concentrations in concert with IL-6 and IL-21, leads to expression of the IL-17 and IL-23 receptors, favoring differentiation to Th17 cells. Stimulates sustained production of collagen through the activation of CREB3L1 by regulated intramembrane proteolysis (RIP). Mediates SMAD2/3 activation by inducing its phosphorylation and subsequent translocation to the nucleus. Positively regulates odontoblastic differentiation in dental papilla cells, via promotion of IPO7-mediated translocation of phosphorylated SMAD2 to the nucleus and subsequent transcription of target genes. Can induce epithelial-to-mesenchymal transition (EMT) and cell migration in various cell types. The sequence is that of Transforming growth factor beta-1 proprotein (TGFB1) from Equus caballus (Horse).